We begin with the raw amino-acid sequence, 453 residues long: 3-phosphoshikimate 1-carboxyvinyltransferase (453 aa).

The segment covering 1–12 (MDVNVTSSTVRG) has biased composition (polar residues). Residues 1–21 (MDVNVTSSTVRGTTRAPPSKS) are disordered. 3-phosphoshikimate is bound by residues Lys-20, Ser-21, and Arg-25. Lys-20 contacts phosphoenolpyruvate. Phosphoenolpyruvate contacts are provided by Gly-97 and Arg-125. 3-phosphoshikimate is bound by residues Ser-170, Ser-171, Gln-172, Ser-198, Asp-330, and Lys-357. Position 172 (Gln-172) interacts with phosphoenolpyruvate. Asp-330 acts as the Proton acceptor in catalysis. The phosphoenolpyruvate site is built by Arg-361 and Arg-404.

Belongs to the EPSP synthase family. In terms of assembly, monomer.

Its subcellular location is the cytoplasm. It carries out the reaction 3-phosphoshikimate + phosphoenolpyruvate = 5-O-(1-carboxyvinyl)-3-phosphoshikimate + phosphate. The protein operates within metabolic intermediate biosynthesis; chorismate biosynthesis. Functionally, catalyzes the transfer of the enolpyruvyl moiety of phosphoenolpyruvate (PEP) to the 5-hydroxyl of shikimate-3-phosphate (S3P) to produce enolpyruvyl shikimate-3-phosphate and inorganic phosphate. The polypeptide is 3-phosphoshikimate 1-carboxyvinyltransferase (Halorubrum lacusprofundi (strain ATCC 49239 / DSM 5036 / JCM 8891 / ACAM 34)).